Reading from the N-terminus, the 158-residue chain is Phosphopantetheine adenylyltransferase (158 aa).

A substrate-binding site is contributed by threonine 10. Residues 10–11 (TF) and histidine 18 each bind ATP. Substrate contacts are provided by lysine 42, leucine 74, and arginine 88. Residues 89–91 (GLR), glutamate 99, and 124–130 (NSFISST) contribute to the ATP site.

This sequence belongs to the bacterial CoaD family. In terms of assembly, homohexamer. Mg(2+) serves as cofactor.

It is found in the cytoplasm. The enzyme catalyses (R)-4'-phosphopantetheine + ATP + H(+) = 3'-dephospho-CoA + diphosphate. It participates in cofactor biosynthesis; coenzyme A biosynthesis; CoA from (R)-pantothenate: step 4/5. Reversibly transfers an adenylyl group from ATP to 4'-phosphopantetheine, yielding dephospho-CoA (dPCoA) and pyrophosphate. The polypeptide is Phosphopantetheine adenylyltransferase (Shewanella loihica (strain ATCC BAA-1088 / PV-4)).